The chain runs to 398 residues: Acetylornithine aminotransferase (398 aa).

Phe-129 lines the pyridoxal 5'-phosphate pocket. Residue Arg-132 coordinates N(2)-acetyl-L-ornithine. Residue 214-217 (DEVQ) coordinates pyridoxal 5'-phosphate. N6-(pyridoxal phosphate)lysine is present on Lys-243. Ser-271 provides a ligand contact to N(2)-acetyl-L-ornithine. Thr-272 contacts pyridoxal 5'-phosphate.

This sequence belongs to the class-III pyridoxal-phosphate-dependent aminotransferase family. ArgD subfamily. Homodimer. Pyridoxal 5'-phosphate serves as cofactor.

The protein resides in the cytoplasm. The enzyme catalyses N(2)-acetyl-L-ornithine + 2-oxoglutarate = N-acetyl-L-glutamate 5-semialdehyde + L-glutamate. Its pathway is amino-acid biosynthesis; L-arginine biosynthesis; N(2)-acetyl-L-ornithine from L-glutamate: step 4/4. The chain is Acetylornithine aminotransferase from Neisseria meningitidis serogroup B (strain ATCC BAA-335 / MC58).